A 215-amino-acid chain; its full sequence is UPF0502 protein YceH (215 aa).

The residue at position 80 (K80) is an N6-acetyllysine.

It belongs to the UPF0502 family.

This is UPF0502 protein YceH from Shigella boydii serotype 18 (strain CDC 3083-94 / BS512).